A 432-amino-acid polypeptide reads, in one-letter code: Transcriptional adapter 3 (432 aa).

K21 participates in a covalent cross-link: Glycyl lysine isopeptide (Lys-Gly) (interchain with G-Cter in SUMO2). A coiled-coil region spans residues 40–69 (IEELDTLQLELETLLSSASRRLRVLEAETQ). Positions 87 to 127 (ARDHELGAPPKHGKPKKQKLEGKTGHGPGPGPGRPKSKNVQ) are disordered. Residue K129 forms a Glycyl lysine isopeptide (Lys-Gly) (interchain with G-Cter in SUMO2) linkage. The tract at residues 272–319 (NIISPMEDSPIPDMSGKESGADGASTSPRNQNKPFSVPHTKSLESRIK) is disordered. 2 positions are modified to phosphoserine: S280 and S298. Positions 295 to 305 (ASTSPRNQNKP) are enriched in polar residues. A coiled-coil region spans residues 367 to 407 (LLRLAKEEVSRQELRQRVRMADNEVMDAFRKIMAARQKKRT). Position 418 is an N6-acetyllysine (K418).

It belongs to the NGG1 family. In terms of assembly, the PCAF complex is composed of a number of TBP-associated factors (TAFS), such as TAF5, TAF5L, TAF6, TAF6L, TAF9, TAF10 and TAF12, PCAF, and also PCAF-associated factors (PAFs), such as TADA2L/ADA2, TADA3L/ADA3 and SPT3. Interacts directly with TADA2L and PCAF and also with the high-risk HPV oncoprotein E6. Component of the STAGA transcription coactivator-HAT complex, at least composed of SUPT3H, GCN5L2, TAF5L, TAF6L, SUPT7L, TADA3L, TAD1L, TAF10, TAF12, TRRAP and TAF9. Component of the TFTC-HAT complex. Component of the ADA2A-containing complex (ATAC), composed of KAT14, KAT2A, TADA2L, TADA3L, ZZ3, MBIP, WDR5, YEATS2, CCDC101 and DR1.

It localises to the nucleus. Functionally, functions as a component of the PCAF complex. The PCAF complex is capable of efficiently acetylating histones in a nucleosomal context. The PCAF complex could be considered as the human version of the yeast SAGA complex. Also known as a coactivator for p53/TP53-dependent transcriptional activation. Component of the ATAC complex, a complex with histone acetyltransferase activity on histones H3 and H4. This Rattus norvegicus (Rat) protein is Transcriptional adapter 3 (Tada3).